The chain runs to 544 residues: Chaperonin GroEL (544 aa).

Residues 29–32 (TMGP), lysine 50, 86–90 (DGTTT), glycine 414, 477–479 (NAA), and aspartate 493 contribute to the ATP site. Residues 525–544 (DKPAMPSMPDMGGMGMPGMM) are disordered.

The protein belongs to the chaperonin (HSP60) family. Forms a cylinder of 14 subunits composed of two heptameric rings stacked back-to-back. Interacts with the co-chaperonin GroES.

It localises to the cytoplasm. The catalysed reaction is ATP + H2O + a folded polypeptide = ADP + phosphate + an unfolded polypeptide.. Together with its co-chaperonin GroES, plays an essential role in assisting protein folding. The GroEL-GroES system forms a nano-cage that allows encapsulation of the non-native substrate proteins and provides a physical environment optimized to promote and accelerate protein folding. The chain is Chaperonin GroEL from Aliarcobacter butzleri (strain RM4018) (Arcobacter butzleri).